Reading from the N-terminus, the 488-residue chain is Glutamyl-tRNA(Gln) amidotransferase subunit A (488 aa).

Residues Lys-77 and Ser-152 each act as charge relay system in the active site. Ser-176 acts as the Acyl-ester intermediate in catalysis.

The protein belongs to the amidase family. GatA subfamily. Heterotrimer of A, B and C subunits.

It carries out the reaction L-glutamyl-tRNA(Gln) + L-glutamine + ATP + H2O = L-glutaminyl-tRNA(Gln) + L-glutamate + ADP + phosphate + H(+). Its function is as follows. Allows the formation of correctly charged Gln-tRNA(Gln) through the transamidation of misacylated Glu-tRNA(Gln) in organisms which lack glutaminyl-tRNA synthetase. The reaction takes place in the presence of glutamine and ATP through an activated gamma-phospho-Glu-tRNA(Gln). The protein is Glutamyl-tRNA(Gln) amidotransferase subunit A of Streptococcus mutans serotype c (strain ATCC 700610 / UA159).